The sequence spans 661 residues: Arginine--tRNA ligase, cytoplasmic (661 aa).

The segment at 1-72 (MEARVAEAAA…QEEQSKTVKS (72 aa)) is could be involved in the assembly of the multisynthetase complex. L-arginine-binding positions include 201-203 (SPN), H212, Y385, D389, and Q413. A 'HIGH' region motif is present at residues 202–213 (PNIAKEMHVGHL). An interaction with tRNA region spans residues 530–544 (NTAAYLLYAFTRIRA).

The protein belongs to the class-I aminoacyl-tRNA synthetase family. As to quaternary structure, monomer; also part of a multisubunit complex that groups tRNA ligases for Arg, Asp, Glu, Gln, Ile, Leu, Lys, Met and Pro.

Its subcellular location is the cytoplasm. The protein localises to the cytosol. The catalysed reaction is tRNA(Arg) + L-arginine + ATP = L-arginyl-tRNA(Arg) + AMP + diphosphate. Functionally, forms part of a macromolecular complex that catalyzes the attachment of specific amino acids to cognate tRNAs during protein synthesis. This is Arginine--tRNA ligase, cytoplasmic (RARS1) from Gallus gallus (Chicken).